Consider the following 181-residue polypeptide: ATP-dependent protease subunit HslV (181 aa).

T7 is an active-site residue. 3 residues coordinate Na(+): G166, C169, and T172.

The protein belongs to the peptidase T1B family. HslV subfamily. In terms of assembly, a double ring-shaped homohexamer of HslV is capped on each side by a ring-shaped HslU homohexamer. The assembly of the HslU/HslV complex is dependent on binding of ATP.

The protein localises to the cytoplasm. The catalysed reaction is ATP-dependent cleavage of peptide bonds with broad specificity.. Allosterically activated by HslU binding. Functionally, protease subunit of a proteasome-like degradation complex believed to be a general protein degrading machinery. The protein is ATP-dependent protease subunit HslV of Variovorax paradoxus (strain S110).